A 471-amino-acid chain; its full sequence is Alpha-galactosidase 5 (471 aa).

The N-terminal stretch at 1–18 (MFAFYFLTACTTLKGVFG) is a signal peptide. C42 and C74 are oxidised to a cystine. Substrate contacts are provided by D72 and D73. N-linked (GlcNAc...) asparagine glycosylation is present at N105. C121 and C151 form a disulfide bridge. Residue K147 coordinates substrate. D149 acts as the Nucleophile in catalysis. N-linked (GlcNAc...) asparagine glycosylation is present at N175. Residue R205 coordinates substrate. Catalysis depends on D209, which acts as the Proton donor. Disulfide bonds link C221-C237 and C223-C230. Substrate is bound at residue Q251. 6 N-linked (GlcNAc...) asparagine glycosylation sites follow: N270, N370, N403, N422, N435, and N454.

It belongs to the glycosyl hydrolase 27 family. As to quaternary structure, homotetramer.

Its subcellular location is the secreted. The catalysed reaction is Hydrolysis of terminal, non-reducing alpha-D-galactose residues in alpha-D-galactosides, including galactose oligosaccharides, galactomannans and galactolipids.. This Saccharomyces cerevisiae (Baker's yeast) protein is Alpha-galactosidase 5 (MEL5).